The following is a 300-amino-acid chain: Cation-efflux pump FieF (300 aa).

Transmembrane regions (helical) follow at residues 11-31 (LAAV…VFAW), 40-60 (LASL…LLVV), 81-101 (LAAL…ILTG), and 114-134 (PEVG…LVSF). Residues Asp45 and Asp49 each coordinate Zn(2+). 2 residues coordinate Zn(2+): His153 and Asp157. The next 2 membrane-spanning stretches (helical) occupy residues 156-176 (SDLL…KGIT) and 182-202 (FALG…YDAV).

Belongs to the cation diffusion facilitator (CDF) transporter (TC 2.A.4) family. FieF subfamily. As to quaternary structure, homodimer.

It is found in the cell inner membrane. The catalysed reaction is Zn(2+)(in) + H(+)(out) = Zn(2+)(out) + H(+)(in). It catalyses the reaction Cd(2+)(in) + H(+)(out) = Cd(2+)(out) + H(+)(in). The enzyme catalyses Fe(2+)(in) + H(+)(out) = Fe(2+)(out) + H(+)(in). Its function is as follows. Divalent metal cation transporter which exports Zn(2+), Cd(2+) and possibly Fe(2+). May be involved in zinc and iron detoxification by efflux. The protein is Cation-efflux pump FieF of Pectobacterium carotovorum subsp. carotovorum (strain PC1).